Consider the following 427-residue polypeptide: Peptidase B (427 aa).

Mn(2+) contacts are provided by K195 and D200. K207 is a catalytic residue. Mn(2+) contacts are provided by D218, D277, and E279. Residue R281 is part of the active site.

The protein belongs to the peptidase M17 family. As to quaternary structure, homohexamer. Requires Mn(2+) as cofactor.

The protein localises to the cytoplasm. It carries out the reaction Release of an N-terminal amino acid, Xaa, from a peptide or arylamide. Xaa is preferably Glu or Asp but may be other amino acids, including Leu, Met, His, Cys and Gln.. In terms of biological role, probably plays an important role in intracellular peptide degradation. The sequence is that of Peptidase B from Salmonella arizonae (strain ATCC BAA-731 / CDC346-86 / RSK2980).